Here is a 238-residue protein sequence, read N- to C-terminus: Xyloglucan-specific endo-beta-1,4-glucanase A (238 aa).

The signal sequence occupies residues 1 to 14; it reads MKLSLLSLATLASA.

The protein belongs to the glycosyl hydrolase 12 (cellulase H) family.

Its subcellular location is the secreted. It catalyses the reaction xyloglucan + H2O = xyloglucan oligosaccharides.. Functionally, catalyzes endohydrolysis of 1,4-beta-D-glucosidic linkages in xyloglucan with retention of the beta-configuration of the glycosyl residues. Specific for xyloglucan and does not hydrolyze other cell wall components. The sequence is that of Xyloglucan-specific endo-beta-1,4-glucanase A (xgeA) from Aspergillus aculeatus.